A 344-amino-acid chain; its full sequence is Uroporphyrinogen decarboxylase (344 aa).

Substrate-binding positions include 24–28, F43, D74, Y149, S204, and H319; that span reads RQAGR.

It belongs to the uroporphyrinogen decarboxylase family. Homodimer.

It localises to the cytoplasm. It catalyses the reaction uroporphyrinogen III + 4 H(+) = coproporphyrinogen III + 4 CO2. It participates in porphyrin-containing compound metabolism; protoporphyrin-IX biosynthesis; coproporphyrinogen-III from 5-aminolevulinate: step 4/4. Functionally, catalyzes the decarboxylation of four acetate groups of uroporphyrinogen-III to yield coproporphyrinogen-III. The polypeptide is Uroporphyrinogen decarboxylase (Agrobacterium fabrum (strain C58 / ATCC 33970) (Agrobacterium tumefaciens (strain C58))).